The following is a 449-amino-acid chain: UNC93-like protein MFSD11 (449 aa).

Residues Leu8–Cys28 traverse the membrane as a helical segment. A glycan (N-linked (GlcNAc...) asparagine) is linked at Asn40. 5 consecutive transmembrane segments (helical) span residues Ala53–Val73, Gly74–Ile94, Pro96–Trp116, Ile138–Trp158, and Arg170–Ile190. Ser204 is modified (phosphoserine). The next 6 helical transmembrane spans lie at Met239–Val259, Leu277–Gly297, Pro309–Met329, Phe359–Leu379, Ala385–Tyr405, and Leu410–Phe430.

Belongs to the unc-93 family.

Its subcellular location is the membrane. In Macaca fascicularis (Crab-eating macaque), this protein is UNC93-like protein MFSD11 (MFSD11).